Reading from the N-terminus, the 554-residue chain is Formate--tetrahydrofolate ligase (554 aa).

ATP is bound at residue 63–70 (TPAGEGKT).

Belongs to the formate--tetrahydrofolate ligase family.

It catalyses the reaction (6S)-5,6,7,8-tetrahydrofolate + formate + ATP = (6R)-10-formyltetrahydrofolate + ADP + phosphate. It functions in the pathway one-carbon metabolism; tetrahydrofolate interconversion. This is Formate--tetrahydrofolate ligase from Halothermothrix orenii (strain H 168 / OCM 544 / DSM 9562).